A 587-amino-acid polypeptide reads, in one-letter code: Solute carrier family 13 member 2 (587 aa).

Transmembrane regions (helical) follow at residues 13-33, 53-73, 86-106, and 136-156; these read FYLIVLCLPIFLLPLPLIVQT, ALPLAVTALFPIVLFPLMGIM, TNILFVGGLMVAIAVEHWNLH, and SMWISNTATTAMMVPIGHAVL. The disordered stretch occupies residues 188–208; the sequence is KLDNGQPVSAPSEPRTQKTQE. A run of 8 helical transmembrane segments spans residues 264–284, 329–349, 367–387, 407–427, 445–465, 477–497, 506–526, and 535–555; these read FAFPTMIILLLLAWLWLQVLF, VLFVLLVVLWFTREPGFFPGW, TVAIFISLVMFIIPSKIPGLM, TVNDKMPWNIVILLGGGFALA, PLQHIPPSATAVILCLLIAIF, LFLPILASMAQAICLHPLYVM, LAFMLPVATPPNAIVFSFGGL, and GFLLNIIGVLAITLSINSWSI.

Belongs to the SLC13A/DASS transporter (TC 2.A.47) family. NADC subfamily. In terms of tissue distribution, expressed in large and small intestine and in the kidney proximal tubules.

It localises to the apical cell membrane. The enzyme catalyses succinate(out) + 3 Na(+)(out) = succinate(in) + 3 Na(+)(in). It catalyses the reaction fumarate(out) + 3 Na(+)(out) = fumarate(in) + 3 Na(+)(in). It carries out the reaction 2-oxoglutarate(out) + 3 Na(+)(out) = 2-oxoglutarate(in) + 3 Na(+)(in). With respect to regulation, li(+) decreases succinate transport in the presence of Na(+), by competing at one of the three cation binding sites. Low-affinity sodium-dicarboxylate cotransporter, that mediates the entry of citric acid cycle intermediates, such as succinate, citrate, fumarate and alpha-ketoglutarate (2-oxoglutarate) into the small intestine and renal proximal tubule. Transports the dicarboxylate into the cell with a probable stoichiometry of 3 Na(+) for 1 divalent dicarboxylate, rendering the process electrogenic. Citrate is transported in protonated form as a divalent anion, rather than the trivalent form which is normally found in blood. Has a critical role in renal dicarboxylate transport. This chain is Solute carrier family 13 member 2 (Slc13a2), found in Rattus norvegicus (Rat).